The following is a 152-amino-acid chain: Large ribosomal subunit protein bL9 (152 aa).

Belongs to the bacterial ribosomal protein bL9 family.

In terms of biological role, binds to the 23S rRNA. In Prochlorococcus marinus (strain NATL2A), this protein is Large ribosomal subunit protein bL9.